A 715-amino-acid chain; its full sequence is Tegument protein UL46 (715 aa).

Disordered regions lie at residues 432–513 (WSAG…CAAQ), 585–605 (DDAR…APYE), and 659–680 (GSAL…PSPV). Over residues 444-455 (GPGGHRAGGGTV) the composition is skewed to gly residues. 2 stretches are compositionally biased toward low complexity: residues 456-467 (GKRFSGPARQRA) and 475-488 (PTLD…VPEA). Residues 664 to 677 (SPPPRPPPPPPLSP) are compositionally biased toward pro residues.

This sequence belongs to the herpesviridae HHV-1 VP11/12 protein family. Interacts with VP16. Interacts with host LCK, PIK3R1, SHC1 AND GRB2; these interactions promote the activation of the PI3K/AKT pathway. Interacts with host YWHAB. Interacts with ICP0; this interaction targets UL46 for degradation by the proteasome. Post-translationally, phosphorylated by host LCK. The phosphorylation seems to be lymphocyte-specific.

The protein resides in the virion tegument. It localises to the host cell membrane. Its function is as follows. Plays a role in the activation of the host PI3K/AKT pathway to promote cell survival. Interacts with and activates host LCK and thereby recruits downstream partners SHC1, GRB2 and PI3KR1 in order to activate the PI3K pathway by phosphorylating host AKT on its activating residues. This mechanism is inhibited by the viral protein US3 that instead promotes incorporation of UL46 into virions. This Human herpesvirus 1 (strain F) (HHV-1) protein is Tegument protein UL46.